Reading from the N-terminus, the 167-residue chain is Crossover junction endodeoxyribonuclease RuvC (167 aa).

Residues Asp7, Glu67, and Asp139 contribute to the active site. Mg(2+) is bound by residues Asp7, Glu67, and Asp139.

The protein belongs to the RuvC family. As to quaternary structure, homodimer which binds Holliday junction (HJ) DNA. The HJ becomes 2-fold symmetrical on binding to RuvC with unstacked arms; it has a different conformation from HJ DNA in complex with RuvA. In the full resolvosome a probable DNA-RuvA(4)-RuvB(12)-RuvC(2) complex forms which resolves the HJ. Mg(2+) is required as a cofactor.

It localises to the cytoplasm. The catalysed reaction is Endonucleolytic cleavage at a junction such as a reciprocal single-stranded crossover between two homologous DNA duplexes (Holliday junction).. Functionally, the RuvA-RuvB-RuvC complex processes Holliday junction (HJ) DNA during genetic recombination and DNA repair. Endonuclease that resolves HJ intermediates. Cleaves cruciform DNA by making single-stranded nicks across the HJ at symmetrical positions within the homologous arms, yielding a 5'-phosphate and a 3'-hydroxyl group; requires a central core of homology in the junction. The consensus cleavage sequence is 5'-(A/T)TT(C/G)-3'. Cleavage occurs on the 3'-side of the TT dinucleotide at the point of strand exchange. HJ branch migration catalyzed by RuvA-RuvB allows RuvC to scan DNA until it finds its consensus sequence, where it cleaves and resolves the cruciform DNA. The polypeptide is Crossover junction endodeoxyribonuclease RuvC (Akkermansia muciniphila (strain ATCC BAA-835 / DSM 22959 / JCM 33894 / BCRC 81048 / CCUG 64013 / CIP 107961 / Muc)).